The sequence spans 305 residues: Ribonuclease BN (305 aa).

Zn(2+)-binding residues include His-64, His-66, Asp-68, His-69, His-141, Asp-212, and His-270. Asp-68 functions as the Proton acceptor in the catalytic mechanism.

This sequence belongs to the RNase Z family. RNase BN subfamily. In terms of assembly, homodimer. It depends on Zn(2+) as a cofactor.

In terms of biological role, zinc phosphodiesterase, which has both exoribonuclease and endoribonuclease activities. This is Ribonuclease BN from Escherichia coli O139:H28 (strain E24377A / ETEC).